The primary structure comprises 794 residues: Phosphoenolpyruvate synthase (794 aa).

Catalysis depends on histidine 422, which acts as the Tele-phosphohistidine intermediate. Substrate contacts are provided by arginine 512, arginine 579, glutamate 681, glycine 702, serine 703, asparagine 704, and aspartate 705. Position 681 (glutamate 681) interacts with Mg(2+). Residue aspartate 705 participates in Mg(2+) binding. The active-site Proton donor is cysteine 752.

The protein belongs to the PEP-utilizing enzyme family. Requires Mg(2+) as cofactor.

The catalysed reaction is pyruvate + ATP + H2O = phosphoenolpyruvate + AMP + phosphate + 2 H(+). The protein operates within carbohydrate biosynthesis; gluconeogenesis. In terms of biological role, catalyzes the phosphorylation of pyruvate to phosphoenolpyruvate. The protein is Phosphoenolpyruvate synthase (ppsA) of Neisseria meningitidis serogroup B (strain ATCC BAA-335 / MC58).